A 778-amino-acid chain; its full sequence is Ribonucleoside-diphosphate reductase large subunit (778 aa).

Residues S177, 192–193 (SC), G221, 419–423 (NLCIE), and 613–617 (PTATS) each bind substrate. C193 and C439 are disulfide-bonded. The active-site Proton acceptor is the N419. C421 acts as the Cysteine radical intermediate in catalysis. The active-site Proton acceptor is E423.

This sequence belongs to the ribonucleoside diphosphate reductase large chain family. As to quaternary structure, heterotetramer composed of a homodimer of the large subunit (R1) and a homodimer of the small subunit (R2). Larger multisubunit protein complex are also active, composed of (R1)n(R2)n.

It carries out the reaction a 2'-deoxyribonucleoside 5'-diphosphate + [thioredoxin]-disulfide + H2O = a ribonucleoside 5'-diphosphate + [thioredoxin]-dithiol. Its activity is regulated as follows. Under complex allosteric control mediated by deoxynucleoside triphosphates and ATP binding. The type of nucleotide bound at the specificity site determines substrate preference. It seems probable that ATP makes the enzyme reduce CDP and UDP, dGTP favors ADP reduction and dTTP favors GDP reduction. In terms of biological role, ribonucleoside-diphosphate reductase holoenzyme provides the precursors necessary for viral DNA synthesis. Allows virus growth in non-dividing cells. Catalyzes the biosynthesis of deoxyribonucleotides from the corresponding ribonucleotides. The chain is Ribonucleoside-diphosphate reductase large subunit from Ornithodoros (relapsing fever ticks).